The chain runs to 54 residues: Ovomucoid (54 aa).

In terms of domain architecture, Kazal-like spans 4 to 54 (VDCSGYPQSACPQDYVPFCGSDNKTYSNKCNFCNAVADSNGTLTLSHFGKC). Disulfide bonds link C6-C36, C14-C33, and C22-C54. N-linked (GlcNAc...) asparagine glycosylation is present at N43.

It localises to the secreted. The chain is Ovomucoid from Gallirallus australis (Weka).